Reading from the N-terminus, the 226-residue chain is Urease accessory protein UreF (226 aa).

The protein belongs to the UreF family. As to quaternary structure, ureD, UreF and UreG form a complex that acts as a GTP-hydrolysis-dependent molecular chaperone, activating the urease apoprotein by helping to assemble the nickel containing metallocenter of UreC. The UreE protein probably delivers the nickel.

It localises to the cytoplasm. In terms of biological role, required for maturation of urease via the functional incorporation of the urease nickel metallocenter. This is Urease accessory protein UreF from Paraburkholderia xenovorans (strain LB400).